Reading from the N-terminus, the 499-residue chain is Bifunctional purine biosynthesis protein PurH (499 aa).

The region spanning 1-144 (MIKRALISVF…KNFKDVVVLT (144 aa)) is the MGS-like domain.

Belongs to the PurH family.

It catalyses the reaction (6R)-10-formyltetrahydrofolate + 5-amino-1-(5-phospho-beta-D-ribosyl)imidazole-4-carboxamide = 5-formamido-1-(5-phospho-D-ribosyl)imidazole-4-carboxamide + (6S)-5,6,7,8-tetrahydrofolate. It carries out the reaction IMP + H2O = 5-formamido-1-(5-phospho-D-ribosyl)imidazole-4-carboxamide. Its pathway is purine metabolism; IMP biosynthesis via de novo pathway; 5-formamido-1-(5-phospho-D-ribosyl)imidazole-4-carboxamide from 5-amino-1-(5-phospho-D-ribosyl)imidazole-4-carboxamide (10-formyl THF route): step 1/1. The protein operates within purine metabolism; IMP biosynthesis via de novo pathway; IMP from 5-formamido-1-(5-phospho-D-ribosyl)imidazole-4-carboxamide: step 1/1. This Clostridium botulinum (strain Langeland / NCTC 10281 / Type F) protein is Bifunctional purine biosynthesis protein PurH.